We begin with the raw amino-acid sequence, 448 residues long: Phosphoglucosamine mutase (448 aa).

Ser100 functions as the Phosphoserine intermediate in the catalytic mechanism. Mg(2+) contacts are provided by Ser100, Asp240, Asp242, and Asp244. Ser100 carries the phosphoserine modification.

It belongs to the phosphohexose mutase family. Mg(2+) is required as a cofactor. Post-translationally, activated by phosphorylation.

It catalyses the reaction alpha-D-glucosamine 1-phosphate = D-glucosamine 6-phosphate. In terms of biological role, catalyzes the conversion of glucosamine-6-phosphate to glucosamine-1-phosphate. This is Phosphoglucosamine mutase from Bacillus cereus (strain ATCC 10987 / NRS 248).